A 310-amino-acid chain; its full sequence is MKITVIGAGNVGATASLRIAEKQLAKEVVLIDIVEGIPQGKALDMYESGPVALFDTCIYGSNDYKDSENSDIVLITAGLARKPGMTREDLLMKNTAIIKEVTEQVMRYSKNPIIIMVSNPLDVMTYVAHTISGLAKERVIGMAGVLDTARFRSFIAEELNVSMQDINAFVLGGHGDSMVPIVKYTSIAGIPITELLPKEKIDAIVERTRNGGIEIVNHLKTGSAYYAPAASAVEMIEAIVKDRKRILPCTTMLNGQFGIDGVFCGVPVKLGKNGIEQILEINLSEYELEALQKSAALVEENCNSLQAVLS.

Residues G7–G12 and D32 each bind NAD(+). 2 residues coordinate substrate: R81 and R87. NAD(+) contacts are provided by residues N94 and V117–N119. Positions 119 and 150 each coordinate substrate. The active-site Proton acceptor is the H174.

It belongs to the LDH/MDH superfamily. MDH type 3 family.

The catalysed reaction is (S)-malate + NAD(+) = oxaloacetate + NADH + H(+). Functionally, catalyzes the reversible oxidation of malate to oxaloacetate. The protein is Malate dehydrogenase of Chlorobium limicola (strain DSM 245 / NBRC 103803 / 6330).